Consider the following 470-residue polypeptide: Cupincin (470 aa).

Positions 1 to 34 (MAKKKTSSSMARSQLAALLISLCFLSLASNAVGW) are cleaved as a signal peptide. A compositionally biased stretch (basic and acidic residues) spans 36 to 52 (RRGEREEEDERRRHGGE). Disordered regions lie at residues 36 to 57 (RRGE…GRPY) and 240 to 261 (KSCS…PSSL). Cupin type-1 domains follow at residues 57–215 (YHFG…EELE) and 259–445 (SSLT…AREA). Asn297 carries N-linked (GlcNAc...) asparagine glycosylation. Positions 330 to 368 (PHVSGGGSSERREREREHGRRREEEQGEEEHGERGEKAR) are disordered. Basic and acidic residues predominate over residues 338–367 (SERREREREHGRRREEEQGEEEHGERGEKA). 3 residues coordinate Zn(2+): His347, Glu352, and His360.

Belongs to the 7S seed storage protein family. In terms of assembly, homotrimer. Zn(2+) serves as cofactor.

The protein resides in the secreted. Its function is as follows. Seed storage protein. Globulin-like protein that acts as a zinc metalloprotease. Cleaves specifically between Leu-15 and Tyr-16 of insulin B chain, and Gln-1 and Leu-2 of neurotensin (NT) peptide in vitro. May play a role as an initiating endopeptidase in germinating seeds. In Oryza sativa subsp. indica (Rice), this protein is Cupincin.